Reading from the N-terminus, the 169-residue chain is S-ribosylhomocysteine lyase (169 aa).

Fe cation contacts are provided by histidine 54, histidine 58, and cysteine 128.

The protein belongs to the LuxS family. As to quaternary structure, homodimer. Requires Fe cation as cofactor.

The catalysed reaction is S-(5-deoxy-D-ribos-5-yl)-L-homocysteine = (S)-4,5-dihydroxypentane-2,3-dione + L-homocysteine. Its function is as follows. Involved in the synthesis of autoinducer 2 (AI-2) which is secreted by bacteria and is used to communicate both the cell density and the metabolic potential of the environment. The regulation of gene expression in response to changes in cell density is called quorum sensing. Catalyzes the transformation of S-ribosylhomocysteine (RHC) to homocysteine (HC) and 4,5-dihydroxy-2,3-pentadione (DPD). The polypeptide is S-ribosylhomocysteine lyase (Shewanella sediminis (strain HAW-EB3)).